We begin with the raw amino-acid sequence, 266 residues long: Glucosamine-6-phosphate deaminase (266 aa).

The active-site Proton acceptor; for enolization step is the D72. D141 serves as the catalytic For ring-opening step. The active-site Proton acceptor; for ring-opening step is H143. Residue E148 is the For ring-opening step of the active site.

The protein belongs to the glucosamine/galactosamine-6-phosphate isomerase family. NagB subfamily. In terms of assembly, homohexamer.

The catalysed reaction is alpha-D-glucosamine 6-phosphate + H2O = beta-D-fructose 6-phosphate + NH4(+). The protein operates within amino-sugar metabolism; N-acetylneuraminate degradation; D-fructose 6-phosphate from N-acetylneuraminate: step 5/5. With respect to regulation, allosterically activated by N-acetylglucosamine 6-phosphate (GlcNAc6P). Its function is as follows. Catalyzes the reversible isomerization-deamination of glucosamine 6-phosphate (GlcN6P) to form fructose 6-phosphate (Fru6P) and ammonium ion. The sequence is that of Glucosamine-6-phosphate deaminase from Aeromonas hydrophila subsp. hydrophila (strain ATCC 7966 / DSM 30187 / BCRC 13018 / CCUG 14551 / JCM 1027 / KCTC 2358 / NCIMB 9240 / NCTC 8049).